A 102-amino-acid polypeptide reads, in one-letter code: Gonadotropin subunit beta-1 (102 aa).

5 disulfide bridges follow: cysteine 8–cysteine 51, cysteine 20–cysteine 65, cysteine 31–cysteine 77, cysteine 35–cysteine 79, and cysteine 82–cysteine 89. Asparagine 12 carries an N-linked (GlcNAc...) asparagine glycan.

The protein belongs to the glycoprotein hormones subunit beta family. Heterodimer of an alpha and a beta chain.

The protein localises to the secreted. Functionally, involved in gametogenesis and steroidogenesis. The sequence is that of Gonadotropin subunit beta-1 (cgba) from Thunnus obesus (Bigeye tuna).